The following is a 275-amino-acid chain: Bis(5'-nucleosyl)-tetraphosphatase, symmetrical (275 aa).

Belongs to the Ap4A hydrolase family.

The catalysed reaction is P(1),P(4)-bis(5'-adenosyl) tetraphosphate + H2O = 2 ADP + 2 H(+). Functionally, hydrolyzes diadenosine 5',5'''-P1,P4-tetraphosphate to yield ADP. This Marinomonas sp. (strain MWYL1) protein is Bis(5'-nucleosyl)-tetraphosphatase, symmetrical.